The following is a 236-amino-acid chain: tRNA (guanine-N(1)-)-methyltransferase (236 aa).

S-adenosyl-L-methionine-binding positions include Gly-112 and 132–137 (VGDFIL).

The protein belongs to the RNA methyltransferase TrmD family. In terms of assembly, homodimer.

It localises to the cytoplasm. The catalysed reaction is guanosine(37) in tRNA + S-adenosyl-L-methionine = N(1)-methylguanosine(37) in tRNA + S-adenosyl-L-homocysteine + H(+). Its function is as follows. Specifically methylates guanosine-37 in various tRNAs. The sequence is that of tRNA (guanine-N(1)-)-methyltransferase from Campylobacter curvus (strain 525.92).